A 304-amino-acid polypeptide reads, in one-letter code: Myelin basic protein (304 aa).

Basic and acidic residues-rich tracts occupy residues 1–12 and 22–32; these read MGNHAGKRELNA and NRGESEKKRNL. The disordered stretch occupies residues 1-146; the sequence is MGNHAGKREL…QKRPSQRHGS (146 aa). The residue at position 2 (Gly-2) is an N-acetylalanine. A compositionally biased stretch (polar residues) spans 51 to 65; sequence ANQNNGTSSQDTAVT. The segment covering 95–113 has biased composition (basic and acidic residues); it reads FSRDAPGREDNTFKDRPSE. Residue Ser-96 is modified to Phosphoserine. Residues 117–130 are compositionally biased toward polar residues; that stretch reads LQTIQEDSAATSES. Residues Ser-141 and Ser-146 each carry the phosphoserine modification. A Phosphotyrosine modification is found at Tyr-148. Thr-151 is subject to Phosphothreonine. A Phosphoserine modification is found at Ser-153. A Phosphothreonine modification is found at Thr-154. Residues Arg-159 and Arg-165 each carry the citrulline; in form C8 modification. The residue at position 167 (Arg-167) is a Citrulline. Thr-169 carries the post-translational modification Phosphothreonine. Ser-174 bears the Phosphoserine mark. Arg-177 and Arg-183 each carry omega-N-methylarginine. Positions 179–222 are induces experimental autoimmune encephalomyelitis (EAE) 1; the sequence is FGGDRGAPKRGSGKDSHHPARTAHYGSLPQKSHGRTQDENPVVH. The segment at 180–249 is disordered; it reads GGDRGAPKRG…GRGLSLSRFS (70 aa). Ser-190 is subject to Phosphoserine. Arg-199 is modified (citrulline). Phosphotyrosine is present on Tyr-203. Ser-210 carries the phosphoserine modification. Thr-214 and Thr-229 each carry phosphothreonine. Arg-231 is subject to Citrulline. A Phosphothreonine modification is found at Thr-232. Position 237 is a deamidated glutamine (Gln-237). Arg-241 is modified (omega-N-methylarginine; alternate). Residue Arg-241 is modified to Symmetric dimethylarginine; alternate. Residues 246–256 are induces experimental autoimmune encephalomyelitis (EAE) 2; that stretch reads SRFSWGAEGQR. Position 249 is a phosphoserine (Ser-249). Arg-256 and Arg-264 each carry citrulline; in form C8. Deamidated glutamine is present on Gln-281. The residue at position 293 (Arg-293) is a Citrulline; in form C8. A Phosphoserine modification is found at Ser-295. Arg-296 bears the Citrulline mark. Ser-299 is modified (phosphoserine; by UHMK1). Arg-303 carries the citrulline modification. At Arg-304 the chain carries Citrulline; in form C8.

This sequence belongs to the myelin basic protein family. In terms of assembly, homodimer. Isoform 3 exists as a homodimer. In terms of processing, several charge isomers of MBP; C1 (the most cationic, least modified, and most abundant form), C2, C3, C4, C5, C6, C7, C8-A and C8-B (the least cationic form); are produced as a result of optional PTM, such as phosphorylation, deamidation of glutamine or asparagine, arginine citrullination and methylation. C8-A and C8-B contain each two mass isoforms termed C8-A(H), C8-A(L), C8-B(H) and C8-B(L), (H) standing for higher and (L) for lower molecular weight. C3, C4 and C5 are phosphorylated. The ratio of methylated arginine residues decreases during aging, making the protein more cationic. The N-terminal alanine is acetylated (isoform 3, isoform 4, isoform 5 and isoform 6). Post-translationally, arg-241 was found to be 6% monomethylated and 60% symmetrically dimethylated. In terms of processing, proteolytically cleaved in B cell lysosomes by cathepsin CTSG which degrades the major immunogenic MBP epitope and prevents the activation of MBP-specific autoreactive T cells. Phosphorylated by TAOK2, VRK2, MAPK11, MAPK12, MAPK14 and MINK1. As to expression, MBP isoforms are found in both the central and the peripheral nervous system, whereas Golli-MBP isoforms are expressed in fetal thymus, spleen and spinal cord, as well as in cell lines derived from the immune system.

The protein localises to the myelin membrane. It localises to the nucleus. The classic group of MBP isoforms (isoform 4-isoform 14) are with PLP the most abundant protein components of the myelin membrane in the CNS. They have a role in both its formation and stabilization. The smaller isoforms might have an important role in remyelination of denuded axons in multiple sclerosis. The non-classic group of MBP isoforms (isoform 1-isoform 3/Golli-MBPs) may preferentially have a role in the early developing brain long before myelination, maybe as components of transcriptional complexes, and may also be involved in signaling pathways in T-cells and neural cells. Differential splicing events combined with optional post-translational modifications give a wide spectrum of isomers, with each of them potentially having a specialized function. Induces T-cell proliferation. This Homo sapiens (Human) protein is Myelin basic protein (MBP).